Here is a 545-residue protein sequence, read N- to C-terminus: Cryptochrome-1 (545 aa).

The Photolyase/cryptochrome alpha/beta domain maps to 3–140 (INNILWFRHG…RCVENVSHTL (138 aa)). FAD-binding positions include arginine 237, serine 265, serine 267, glutamine 308, histidine 375, 407-409 (DAD), cysteine 413, and asparagine 416.

It belongs to the DNA photolyase class-1 family. In terms of assembly, interacts with tim and per; promoted by light conditions. It depends on FAD as a cofactor.

The protein resides in the cytoplasm. It localises to the perinuclear region. It is found in the nucleus. Its function is as follows. Blue light-dependent regulator that is the input of the circadian feedback loop. Has no photolyase activity for cyclobutane pyrimidine dimers or 6-4 photoproducts. Regulation of expression by light suggests a role in photoreception for locomotor activity rhythms. Functions, together with per, as a transcriptional repressor required for the oscillation of peripheral circadian clocks and for the correct specification of clock cells. Genes directly activated by the transcription factors Clock (Clk) and cycle (cyc) are repressed by cry. The polypeptide is Cryptochrome-1 (Anopheles gambiae (African malaria mosquito)).